Reading from the N-terminus, the 233-residue chain is 27 kDa hemolymph glycoprotein (233 aa).

The N-terminal stretch at 1–17 (MIWKTLIVAFMATAVLA) is a signal peptide. N-linked (GlcNAc...) asparagine glycosylation is found at N125 and N156.

This sequence belongs to the UPF0408 family. N-glycosylated. As to expression, hemolymph.

The protein resides in the secreted. This Manduca sexta (Tobacco hawkmoth) protein is 27 kDa hemolymph glycoprotein.